Consider the following 173-residue polypeptide: Probable xanthine dehydrogenase subunit E (173 aa).

The 77-residue stretch at 14-90 folds into the 2Fe-2S ferredoxin-type domain; that stretch reads EQFRMTVNGQ…GHSITTIEGL (77 aa). Residues Cys52, Cys57, Cys60, Cys72, Cys110, Cys113, Cys145, and Cys147 each contribute to the [2Fe-2S] cluster site.

Could be composed of four subunits: PucA, PucC, PucD and PucE. Requires [2Fe-2S] cluster as cofactor.

The enzyme catalyses xanthine + NAD(+) + H2O = urate + NADH + H(+). The catalysed reaction is hypoxanthine + NAD(+) + H2O = xanthine + NADH + H(+). The protein operates within purine metabolism; hypoxanthine degradation; urate from hypoxanthine: step 1/2. It functions in the pathway purine metabolism; hypoxanthine degradation; urate from hypoxanthine: step 2/2. In terms of biological role, oxidizes hypoxanthine and xanthine to uric acid. This is Probable xanthine dehydrogenase subunit E (pucE) from Bacillus subtilis (strain 168).